A 257-amino-acid chain; its full sequence is Type III pantothenate kinase (257 aa).

Residue 6 to 13 coordinates ATP; it reads DCGNTNTV. 107-110 provides a ligand contact to substrate; it reads GPDR. Catalysis depends on aspartate 109, which acts as the Proton acceptor. Aspartate 129 is a binding site for K(+). Position 132 (threonine 132) interacts with ATP. Threonine 184 is a substrate binding site.

Belongs to the type III pantothenate kinase family. In terms of assembly, homodimer. Requires NH4(+) as cofactor. K(+) is required as a cofactor.

It localises to the cytoplasm. The catalysed reaction is (R)-pantothenate + ATP = (R)-4'-phosphopantothenate + ADP + H(+). It functions in the pathway cofactor biosynthesis; coenzyme A biosynthesis; CoA from (R)-pantothenate: step 1/5. Its function is as follows. Catalyzes the phosphorylation of pantothenate (Pan), the first step in CoA biosynthesis. In Roseobacter denitrificans (strain ATCC 33942 / OCh 114) (Erythrobacter sp. (strain OCh 114)), this protein is Type III pantothenate kinase.